The following is a 101-amino-acid chain: Putative pterin-4-alpha-carbinolamine dehydratase (101 aa).

The protein belongs to the pterin-4-alpha-carbinolamine dehydratase family.

The enzyme catalyses (4aS,6R)-4a-hydroxy-L-erythro-5,6,7,8-tetrahydrobiopterin = (6R)-L-erythro-6,7-dihydrobiopterin + H2O. This is Putative pterin-4-alpha-carbinolamine dehydratase from Burkholderia mallei (strain ATCC 23344).